The primary structure comprises 182 residues: uncharacterized protein (182 aa).

2 helical membrane passes run 58 to 78 and 81 to 101; these read ILFG…YVVY and PVSI…IIIW.

The protein to M.jannaschii MJ0803.

Its subcellular location is the cell membrane. This is an uncharacterized protein from Methanocaldococcus jannaschii (strain ATCC 43067 / DSM 2661 / JAL-1 / JCM 10045 / NBRC 100440) (Methanococcus jannaschii).